Reading from the N-terminus, the 228-residue chain is Cytidylate kinase (228 aa).

17–25 contributes to the ATP binding site; it reads GPTASGKGT.

This sequence belongs to the cytidylate kinase family. Type 1 subfamily.

It localises to the cytoplasm. It catalyses the reaction CMP + ATP = CDP + ADP. The enzyme catalyses dCMP + ATP = dCDP + ADP. The protein is Cytidylate kinase of Burkholderia ambifaria (strain MC40-6).